The chain runs to 566 residues: Class II hydrophobin FOXG_02748 (566 aa).

The first 22 residues, 1–22 (MKSKSIMAASTVMELALAQASA), serve as a signal peptide directing secretion. Disulfide bonds link Cys497-Cys546, Cys507-Cys537, Cys508-Cys520, and Cys547-Cys558.

Belongs to the cerato-ulmin hydrophobin family. Homodimer. Homodimers further self-assemble to form highly ordered films at water-air interfaces through intermolecular interactions.

It is found in the secreted. Its subcellular location is the cell wall. Aerial growth, conidiation, and dispersal of filamentous fungi in the environment rely upon a capability of their secreting small amphipathic proteins called hydrophobins (HPBs) with low sequence identity. Class I can self-assemble into an outermost layer of rodlet bundles on aerial cell surfaces, conferring cellular hydrophobicity that supports fungal growth, development and dispersal; whereas Class II form highly ordered films at water-air interfaces through intermolecular interactions but contribute nothing to the rodlet structure. FOXG_02748 is a class II hydrophobin that is likely required for plant colonization. In Fusarium oxysporum f. sp. lycopersici (strain 4287 / CBS 123668 / FGSC 9935 / NRRL 34936) (Fusarium vascular wilt of tomato), this protein is Class II hydrophobin FOXG_02748.